The following is a 729-amino-acid chain: Beta-galactosidase 4 (729 aa).

The signal sequence occupies residues 1–35 (MAPAPTPAAAAGRRVAVLAAALVAASLAASVGVAN). Glutamate 194 acts as the Proton donor in catalysis. Catalysis depends on glutamate 263, which acts as the Nucleophile.

The protein belongs to the glycosyl hydrolase 35 family.

The protein resides in the secreted. The protein localises to the extracellular space. It is found in the apoplast. It carries out the reaction Hydrolysis of terminal non-reducing beta-D-galactose residues in beta-D-galactosides.. This Oryza sativa subsp. japonica (Rice) protein is Beta-galactosidase 4.